We begin with the raw amino-acid sequence, 107 residues long: Thiosulfate sulfurtransferase GlpE (107 aa).

Residues 17-105 form the Rhodanese domain; sequence RQGEAVLVDI…WLKAFPLETE (89 aa). Cysteine 65 functions as the Cysteine persulfide intermediate in the catalytic mechanism.

It belongs to the GlpE family.

Its subcellular location is the cytoplasm. The enzyme catalyses thiosulfate + hydrogen cyanide = thiocyanate + sulfite + 2 H(+). It catalyses the reaction thiosulfate + [thioredoxin]-dithiol = [thioredoxin]-disulfide + hydrogen sulfide + sulfite + 2 H(+). In terms of biological role, transferase that catalyzes the transfer of sulfur from thiosulfate to thiophilic acceptors such as cyanide or dithiols. May function in a CysM-independent thiosulfate assimilation pathway by catalyzing the conversion of thiosulfate to sulfite, which can then be used for L-cysteine biosynthesis. The protein is Thiosulfate sulfurtransferase GlpE of Sodalis glossinidius (strain morsitans).